The following is a 274-amino-acid chain: Undecaprenyl-diphosphatase 2 (274 aa).

6 helical membrane-spanning segments follow: residues 47–64 (VFVI…CWEY), 82–102 (WKFV…GLTF), 110–130 (LFSP…ILWA), 185–205 (ATEF…LYDL), 219–239 (LMAV…RGLI), and 249–269 (VFAW…WSGL).

The protein belongs to the UppP family.

The protein localises to the cell inner membrane. The enzyme catalyses di-trans,octa-cis-undecaprenyl diphosphate + H2O = di-trans,octa-cis-undecaprenyl phosphate + phosphate + H(+). Its function is as follows. Catalyzes the dephosphorylation of undecaprenyl diphosphate (UPP). Confers resistance to bacitracin. The chain is Undecaprenyl-diphosphatase 2 from Rhodospirillum rubrum (strain ATCC 11170 / ATH 1.1.1 / DSM 467 / LMG 4362 / NCIMB 8255 / S1).